Reading from the N-terminus, the 445-residue chain is V-type proton ATPase subunit H (445 aa).

Belongs to the V-ATPase H subunit family. In terms of assembly, V-ATPase is a heteromultimeric enzyme composed of a peripheral catalytic V1 complex (components A to H) attached to an integral membrane V0 proton pore complex (components: a, c, c', c'' and d).

Its function is as follows. Subunit of the peripheral V1 complex of vacuolar ATPase. Subunit H activates the ATPase activity of the enzyme and couples ATPase activity to proton flow. Vacuolar ATPase is responsible for acidifying a variety of intracellular compartments in eukaryotic cells, thus providing most of the energy required for transport processes in the vacuolar system. The sequence is that of V-type proton ATPase subunit H (vatH) from Dictyostelium discoideum (Social amoeba).